Consider the following 426-residue polypeptide: Probable imidazolonepropionase (426 aa).

2 residues coordinate 4-imidazolone-5-propanoate: Tyr-159 and His-192. Tyr-159 provides a ligand contact to N-formimidoyl-L-glutamate. Residue His-260 coordinates Fe(3+). His-260 provides a ligand contact to Zn(2+). Glu-263 is a 4-imidazolone-5-propanoate binding site. Position 334 (Asp-334) interacts with Fe(3+). Asp-334 serves as a coordination point for Zn(2+). Position 336 (Asn-336) interacts with N-formimidoyl-L-glutamate.

It belongs to the metallo-dependent hydrolases superfamily. HutI family. Zn(2+) is required as a cofactor. Fe(3+) serves as cofactor.

It carries out the reaction 4-imidazolone-5-propanoate + H2O = N-formimidoyl-L-glutamate. It participates in amino-acid degradation; L-histidine degradation into L-glutamate; N-formimidoyl-L-glutamate from L-histidine: step 3/3. This chain is Probable imidazolonepropionase (Amdhd1), found in Mus musculus (Mouse).